The following is a 205-amino-acid chain: Ephrin-A1 (205 aa).

Positions 1–18 (MEFLWAPLLGLCCSLAAA) are cleaved as a signal peptide. Residues 19–151 (DRHTVFWNSS…KLKVTVSGKI (133 aa)) form the Ephrin RBD domain. A glycan (N-linked (GlcNAc...) asparagine) is linked at Asn26. Cystine bridges form between Cys51–Cys92 and Cys80–Cys140. A lipid anchor (GPI-anchor amidated serine) is attached at Ser182. A propeptide spans 183–205 (AAPRLSPLAWAVLLLPFLLLQTS) (removed in mature form).

It belongs to the ephrin family. Monomer. Homodimer. Forms heterodimers with EPHA2. Binds to the receptor tyrosine kinases EPHA2, EPHA3, EPHA4, EPHA5, EPHA6 and EPHA7. Also binds with low affinity to EPHA1. Undergoes proteolysis by a metalloprotease to give rise to a soluble monomeric form. Post-translationally, N-Glycosylation is required for binding to EPHA2 receptor and inducing its internalization.

Its subcellular location is the cell membrane. The protein localises to the secreted. In terms of biological role, cell surface GPI-bound ligand for Eph receptors, a family of receptor tyrosine kinases which are crucial for migration, repulsion and adhesion during neuronal, vascular and epithelial development. Binds promiscuously Eph receptors residing on adjacent cells, leading to contact-dependent bidirectional signaling into neighboring cells. Plays an important role in angiogenesis and tumor neovascularization. The recruitment of VAV2, VAV3 and PI3-kinase p85 subunit by phosphorylated EPHA2 is critical for EFNA1-induced RAC1 GTPase activation and vascular endothelial cell migration and assembly. Exerts anti-oncogenic effects in tumor cells through activation and down-regulation of EPHA2. Activates EPHA2 by inducing tyrosine phosphorylation which leads to its internalization and degradation. Acts as a negative regulator in the tumorigenesis of gliomas by down-regulating EPHA2 and FAK. Can evoke collapse of embryonic neuronal growth cone and regulates dendritic spine morphogenesis. The protein is Ephrin-A1 (EFNA1) of Sus scrofa (Pig).